Here is a 134-residue protein sequence, read N- to C-terminus: ATP synthase epsilon chain (134 aa).

This sequence belongs to the ATPase epsilon chain family. F-type ATPases have 2 components, CF(1) - the catalytic core - and CF(0) - the membrane proton channel. CF(1) has five subunits: alpha(3), beta(3), gamma(1), delta(1), epsilon(1). CF(0) has three main subunits: a, b and c.

It localises to the cell membrane. Its function is as follows. Produces ATP from ADP in the presence of a proton gradient across the membrane. This Alkaliphilus metalliredigens (strain QYMF) protein is ATP synthase epsilon chain.